Here is a 359-residue protein sequence, read N- to C-terminus: Patr class I histocompatibility antigen, B-1 alpha chain (359 aa).

The first 20 residues, 1-20 (APRTVLLLLSAALALTETWA), serve as a signal peptide directing secretion. The tract at residues 21 to 110 (GSHSMRYFYT…ALRYYNQSEA (90 aa)) is alpha-1. The Extracellular segment spans residues 21-305 (GSHSMRYFYT…PSSQSTIPIV (285 aa)). N-linked (GlcNAc...) asparagine glycosylation is present at Asn-106. Positions 111 to 202 (GSHTWQTMYG…ENGKETLQRA (92 aa)) are alpha-2. 2 disulfide bridges follow: Cys-121–Cys-184 and Cys-223–Cys-279. The interval 203 to 294 (DPPKTHVTHH…GLPKPLTLRW (92 aa)) is alpha-3. The 87-residue stretch at 205 to 291 (PKTHVTHHPI…QHEGLPKPLT (87 aa)) folds into the Ig-like C1-type domain. The segment at 295–305 (EPSSQSTIPIV) is connecting peptide. Residues 306–329 (GIVAGLAVLVVTVAVVAVVAAVMC) form a helical membrane-spanning segment. Residues 330 to 359 (RRKSSGGKGGSYSQAASSDSAQGSDVSLTA) are Cytoplasmic-facing. The interval 332–359 (KSSGGKGGSYSQAASSDSAQGSDVSLTA) is disordered. Positions 340–359 (SYSQAASSDSAQGSDVSLTA) are enriched in low complexity. Phosphoserine occurs at positions 353 and 356.

This sequence belongs to the MHC class I family. Heterodimer of an alpha chain and a beta chain (beta-2-microglobulin).

The protein localises to the membrane. In terms of biological role, involved in the presentation of foreign antigens to the immune system. This is Patr class I histocompatibility antigen, B-1 alpha chain from Pan troglodytes (Chimpanzee).